Reading from the N-terminus, the 177-residue chain is Transmembrane protein 275 (177 aa).

The interval 1–20 (MPQAKKSTETLAPAPPGRSR) is disordered. Transmembrane regions (helical) follow at residues 36–56 (GLCVLLAGLNVTLVGAFAAFL) and 63–83 (LVVGPALLVLALGFFAACCVC). The tract at residues 113–177 (ESSERTAQDT…LNFPRDPAAS (65 aa)) is disordered. Residues 128–161 (SPAASAASSGRSSPGPGLFALDPPAPATAAPYLP) show a composition bias toward low complexity.

The protein localises to the membrane. The polypeptide is Transmembrane protein 275 (Mus musculus (Mouse)).